Reading from the N-terminus, the 76-residue chain is uORF2 protein (76 aa).

In terms of biological role, plays a role in viral replication. The chain is uORF2 protein from Zika virus (isolate ZIKV/Human/French Polynesia/10087PF/2013) (ZIKV).